We begin with the raw amino-acid sequence, 270 residues long: Elongation factor Ts (270 aa).

The interval 76–79 (TDFV) is involved in Mg(2+) ion dislocation from EF-Tu.

It belongs to the EF-Ts family.

The protein localises to the cytoplasm. In terms of biological role, associates with the EF-Tu.GDP complex and induces the exchange of GDP to GTP. It remains bound to the aminoacyl-tRNA.EF-Tu.GTP complex up to the GTP hydrolysis stage on the ribosome. This chain is Elongation factor Ts, found in Corynebacterium aurimucosum (strain ATCC 700975 / DSM 44827 / CIP 107346 / CN-1) (Corynebacterium nigricans).